The primary structure comprises 570 residues: Proline--tRNA ligase (570 aa).

The protein belongs to the class-II aminoacyl-tRNA synthetase family. ProS type 1 subfamily. As to quaternary structure, homodimer.

It is found in the cytoplasm. It catalyses the reaction tRNA(Pro) + L-proline + ATP = L-prolyl-tRNA(Pro) + AMP + diphosphate. In terms of biological role, catalyzes the attachment of proline to tRNA(Pro) in a two-step reaction: proline is first activated by ATP to form Pro-AMP and then transferred to the acceptor end of tRNA(Pro). As ProRS can inadvertently accommodate and process non-cognate amino acids such as alanine and cysteine, to avoid such errors it has two additional distinct editing activities against alanine. One activity is designated as 'pretransfer' editing and involves the tRNA(Pro)-independent hydrolysis of activated Ala-AMP. The other activity is designated 'posttransfer' editing and involves deacylation of mischarged Ala-tRNA(Pro). The misacylated Cys-tRNA(Pro) is not edited by ProRS. This is Proline--tRNA ligase from Neisseria meningitidis serogroup B (strain ATCC BAA-335 / MC58).